A 335-amino-acid chain; its full sequence is Phospho-N-acetylmuramoyl-pentapeptide-transferase (335 aa).

Transmembrane regions (helical) follow at residues 5–25 (IFLA…LMIP), 50–70 (TPTM…LIMA), 78–98 (MVMV…DDFI), 114–133 (LIGQ…RYLG), 145–165 (IHLE…VGIT), 177–197 (LAAG…TLAA), 200–220 (GGGV…AAAV), 236–256 (VFMG…LAVL), 262–282 (ILLI…LQVF), and 311–331 (VVMV…IAYM).

Belongs to the glycosyltransferase 4 family. MraY subfamily. Mg(2+) is required as a cofactor.

The protein localises to the cell membrane. It catalyses the reaction UDP-N-acetyl-alpha-D-muramoyl-L-alanyl-gamma-D-glutamyl-meso-2,6-diaminopimeloyl-D-alanyl-D-alanine + di-trans,octa-cis-undecaprenyl phosphate = di-trans,octa-cis-undecaprenyl diphospho-N-acetyl-alpha-D-muramoyl-L-alanyl-D-glutamyl-meso-2,6-diaminopimeloyl-D-alanyl-D-alanine + UMP. It functions in the pathway cell wall biogenesis; peptidoglycan biosynthesis. In terms of biological role, catalyzes the initial step of the lipid cycle reactions in the biosynthesis of the cell wall peptidoglycan: transfers peptidoglycan precursor phospho-MurNAc-pentapeptide from UDP-MurNAc-pentapeptide onto the lipid carrier undecaprenyl phosphate, yielding undecaprenyl-pyrophosphoryl-MurNAc-pentapeptide, known as lipid I. The protein is Phospho-N-acetylmuramoyl-pentapeptide-transferase of Desulfitobacterium hafniense (strain DSM 10664 / DCB-2).